The chain runs to 484 residues: Toluene efflux pump outer membrane protein TtgC (484 aa).

The signal sequence occupies residues 1-17 (MTKSLLSLAVTAFILGG). A lipid anchor (N-palmitoyl cysteine) is attached at Cys18. The S-diacylglycerol cysteine moiety is linked to residue Cys18.

It belongs to the outer membrane factor (OMF) (TC 1.B.17) family.

It is found in the cell outer membrane. In terms of biological role, the outer membrane component of a constitutive organic solvent efflux system. Is involved in export of toluene, styrene, m-xylene, propylbenzene and ethylbenzene. Also exports AMP and the antibiotics carbenicillin, nalidixic acid, chloramphenicol and tetracycline. This chain is Toluene efflux pump outer membrane protein TtgC (ttgC), found in Pseudomonas putida (strain DOT-T1E).